Here is a 272-residue protein sequence, read N- to C-terminus: Tryptophan synthase alpha chain (272 aa).

Catalysis depends on proton acceptor residues Glu49 and Asp60.

The protein belongs to the TrpA family. As to quaternary structure, tetramer of two alpha and two beta chains.

The enzyme catalyses (1S,2R)-1-C-(indol-3-yl)glycerol 3-phosphate + L-serine = D-glyceraldehyde 3-phosphate + L-tryptophan + H2O. The protein operates within amino-acid biosynthesis; L-tryptophan biosynthesis; L-tryptophan from chorismate: step 5/5. Its function is as follows. The alpha subunit is responsible for the aldol cleavage of indoleglycerol phosphate to indole and glyceraldehyde 3-phosphate. This chain is Tryptophan synthase alpha chain, found in Polaromonas sp. (strain JS666 / ATCC BAA-500).